The chain runs to 445 residues: Probable glycine dehydrogenase (decarboxylating) subunit 1 (445 aa).

Belongs to the GcvP family. N-terminal subunit subfamily. In terms of assembly, the glycine cleavage system is composed of four proteins: P, T, L and H. In this organism, the P 'protein' is a heterodimer of two subunits.

The enzyme catalyses N(6)-[(R)-lipoyl]-L-lysyl-[glycine-cleavage complex H protein] + glycine + H(+) = N(6)-[(R)-S(8)-aminomethyldihydrolipoyl]-L-lysyl-[glycine-cleavage complex H protein] + CO2. In terms of biological role, the glycine cleavage system catalyzes the degradation of glycine. The P protein binds the alpha-amino group of glycine through its pyridoxal phosphate cofactor; CO(2) is released and the remaining methylamine moiety is then transferred to the lipoamide cofactor of the H protein. The protein is Probable glycine dehydrogenase (decarboxylating) subunit 1 of Anaeromyxobacter sp. (strain Fw109-5).